A 390-amino-acid chain; its full sequence is Flagellar P-ring protein (390 aa).

A signal peptide spans 1 to 25 (MLLKKIFLTGIIVLDLVFFVSYGFA).

The protein belongs to the FlgI family. In terms of assembly, the basal body constitutes a major portion of the flagellar organelle and consists of four rings (L,P,S, and M) mounted on a central rod.

It is found in the periplasm. It localises to the bacterial flagellum basal body. Its function is as follows. Assembles around the rod to form the L-ring and probably protects the motor/basal body from shearing forces during rotation. This Syntrophus aciditrophicus (strain SB) protein is Flagellar P-ring protein.